Consider the following 244-residue polypeptide: Glucosamine-6-phosphate deaminase (244 aa).

The active-site Proton acceptor; for enolization step is the Asp-67. The For ring-opening step role is filled by Asn-136. His-138 acts as the Proton acceptor; for ring-opening step in catalysis. Glu-143 (for ring-opening step) is an active-site residue.

This sequence belongs to the glucosamine/galactosamine-6-phosphate isomerase family. NagB subfamily.

The enzyme catalyses alpha-D-glucosamine 6-phosphate + H2O = beta-D-fructose 6-phosphate + NH4(+). The protein operates within amino-sugar metabolism; N-acetylneuraminate degradation; D-fructose 6-phosphate from N-acetylneuraminate: step 5/5. Catalyzes the reversible isomerization-deamination of glucosamine 6-phosphate (GlcN6P) to form fructose 6-phosphate (Fru6P) and ammonium ion. This is Glucosamine-6-phosphate deaminase from Clostridium botulinum (strain Okra / Type B1).